The sequence spans 149 residues: Arginine repressor (149 aa).

This sequence belongs to the ArgR family.

The protein resides in the cytoplasm. The protein operates within amino-acid biosynthesis; L-arginine biosynthesis [regulation]. In terms of biological role, regulates arginine biosynthesis genes. This chain is Arginine repressor, found in Listeria innocua serovar 6a (strain ATCC BAA-680 / CLIP 11262).